A 504-amino-acid chain; its full sequence is Putative ribose/galactose/methyl galactoside import ATP-binding protein (504 aa).

ABC transporter domains follow at residues Ile5–Leu242 and Thr252–Glu497. Residue Gly37–Ser44 participates in ATP binding.

This sequence belongs to the ABC transporter superfamily. Carbohydrate importer 2 (CUT2) (TC 3.A.1.2) family.

Its subcellular location is the cell inner membrane. The enzyme catalyses D-ribose(out) + ATP + H2O = D-ribose(in) + ADP + phosphate + H(+). It catalyses the reaction D-galactose(out) + ATP + H2O = D-galactose(in) + ADP + phosphate + H(+). Functionally, part of an ABC transporter complex involved in carbohydrate import. Could be involved in ribose, galactose and/or methyl galactoside import. Responsible for energy coupling to the transport system. The sequence is that of Putative ribose/galactose/methyl galactoside import ATP-binding protein from Albidiferax ferrireducens (strain ATCC BAA-621 / DSM 15236 / T118) (Rhodoferax ferrireducens).